A 64-amino-acid chain; its full sequence is Conotoxin Im11.1 (64 aa).

The N-terminal stretch at 1 to 26 is a signal peptide; sequence MMFRLTSVSCFLLVIACLNLVVLTNA. Intrachain disulfides connect Cys-27–Cys-41, Cys-34–Cys-46, Cys-40–Cys-50, and Cys-45–Cys-54. Position 57 is an asparagine amide (Asn-57). A propeptide spanning residues 61–64 is cleaved from the precursor; it reads ATFQ.

The protein belongs to the conotoxin I2 superfamily. Expressed by the venom duct.

It is found in the secreted. The chain is Conotoxin Im11.1 from Conus imperialis (Imperial cone).